The primary structure comprises 437 residues: UDP-N-acetylmuramate--L-alanine ligase (437 aa).

An ATP-binding site is contributed by 108–114 (GAHGKTS).

Belongs to the MurCDEF family.

It localises to the cytoplasm. The catalysed reaction is UDP-N-acetyl-alpha-D-muramate + L-alanine + ATP = UDP-N-acetyl-alpha-D-muramoyl-L-alanine + ADP + phosphate + H(+). Its pathway is cell wall biogenesis; peptidoglycan biosynthesis. Functionally, cell wall formation. The protein is UDP-N-acetylmuramate--L-alanine ligase of Staphylococcus aureus (strain COL).